A 547-amino-acid chain; its full sequence is Putative cysteine ligase BshC (547 aa).

Residues 461–504 (ASTEATRSAIMDEMEALKQKVVRAEKRQQDEVRAQLKKAHTNLR) are a coiled coil.

The protein belongs to the BshC family.

The protein is Putative cysteine ligase BshC of Salinibacter ruber (strain DSM 13855 / M31).